The following is a 460-amino-acid chain: TNF receptor-associated factor family protein DDB_G0290883 (460 aa).

Residues 27–67 (CPICFEFIYKKQIYQCKSGHHACKECWEKSLETKKECMTCK) form an RING-type; degenerate zinc finger. TRAF-type zinc fingers lie at residues 141-194 (SHLI…KKEL) and 196-253 (THYK…SELQ). An MATH domain is found at 320–448 (GYRNKWIISN…DDKLTIEIYI (129 aa)).

This sequence belongs to the TNF receptor-associated factor family. A subfamily.

The protein resides in the cytoplasm. Functionally, probable adapter protein and signal transducer that links members of the tumor necrosis factor receptor family to different signaling pathways by association with the receptor cytoplasmic domain and kinases. This is TNF receptor-associated factor family protein DDB_G0290883 from Dictyostelium discoideum (Social amoeba).